A 479-amino-acid chain; its full sequence is Odorant receptor coreceptor (479 aa).

Residues 1–43 (MMKMKQQGLVADLLPNIRVMKFFGHFVFNYYDDNSSKYLHKIF) are Cytoplasmic-facing. The chain crosses the membrane as a helical span at residues 44–64 (CCVNLFLLLLQFALCAVNLII). The Extracellular segment spans residues 65–73 (ESADVDDLT). Residues 74–94 (ANTITLLFFTHSIVKIIYFAV) form a helical membrane-spanning segment. The Cytoplasmic segment spans residues 95–133 (RSKYFYRTWAIWNNPNSHPLFAESNARYHAIALKKMRLL). The helical transmembrane segment at 134–154 (LFLVGATTVLSAIAWTVLTFF) threads the bilayer. The Extracellular portion of the chain corresponds to 155–190 (EHPIRKLVDPVTNETTIIELPQLLLRSYYPFDASKG). A glycan (N-linked (GlcNAc...) asparagine) is linked at Asn-167. The chain crosses the membrane as a helical span at residues 191-211 (IMHVIVLIYQFYWVLFMLIDA). Topologically, residues 212–350 (NSLDVLFCSW…IVRLVTAVGD (139 aa)) are cytoplasmic. A disordered region spans residues 261–280 (SAEHLRESENQPPPPVPPQG). The chain crosses the membrane as a helical span at residues 351–371 (AYGFALLLHMLTTTITLTLLA). The Extracellular segment spans residues 372 to 383 (YQATKVNGVNVY). A helical transmembrane segment spans residues 384 to 404 (AASTIGYIIYTFGQVFLFCIF). The Cytoplasmic portion of the chain corresponds to 405 to 455 (GNRLIEESTSVMEAAYSCHWYDGSEEAKTFVQIVCQQCQKAMSISGAKFFT). A helical membrane pass occupies residues 456-476 (VSLDLFASVLGAVVTYFMVLV). Residues 477–479 (QLK) lie on the Extracellular side of the membrane.

It belongs to the insect chemoreceptor superfamily. Heteromeric odorant receptor channel (TC 1.A.69) family. Orco subfamily. As to quaternary structure, heterodimer with conventional odorant receptors (ORs).

It is found in the cell membrane. Its function is as follows. Odorant coreceptor which complexes with conventional odorant receptors (ORs) to form odorant-sensing units, providing sensitive and prolonged odorant signaling and calcium permeability. Obligate coreceptor of all odorant receptors. Orco is a universal and integral part of the functional odorant receptor, involved in the dendritic localization of other olfactory receptors. Can form functional ion channels in the absence of an odor-binding odorant receptor. Plays a central role in the perception of olfactory stimuli in ants and is essential for ant social organization. Required for pheromone sensing and mating behavior. Also required for the development and maintenance of odorant receptor neurons (ORNs) and of antennal lobe glomeruli. In Harpegnathos saltator (Jerdon's jumping ant), this protein is Odorant receptor coreceptor.